The sequence spans 395 residues: Zinc-regulated GTPase metalloprotein activator 1A (395 aa).

The interval 1-22 (MLPAVGSADEEEDPAEEDCPEL) is disordered. Residues 8-20 (ADEEEDPAEEDCP) are compositionally biased toward acidic residues. The psi-PxLVp motif motif lies at 17–24 (EDCPELVP). 49 to 56 (GYLGAGKT) contacts GTP. Zn(2+)-binding residues include cysteine 107, cysteine 109, and cysteine 110. A CXCC motif motif is present at residues 107–110 (CLCC). GTP contacts are provided by residues 110–114 (CSVKD) and 203–206 (NKTD). A CobW C-terminal domain is found at 274 to 377 (IVTITFEVPG…ILKQLFIATV (104 aa)).

The protein belongs to the SIMIBI class G3E GTPase family. ZNG1 subfamily. As to expression, ubiquitously expressed. Up-regulated in cultured astrocytes treated with dopamine.

It is found in the nucleus. It carries out the reaction GTP + H2O = GDP + phosphate + H(+). Functionally, zinc chaperone that directly transfers zinc cofactor to target metalloproteins, thereby activating them. Catalyzes zinc insertion into the active site of methionine aminopeptidase METAP1, which function to cleave the initiator methionine from polypeptides during or after protein translation. Mechanistically, the N-terminal psi-PxLVp motif binds to the C6H2-type zinc finger of inactive form of METAP1. After formation of the docked complex, zinc is transferred from the CXCC motif in the GTPase domain of ZNG1A to the zinc binding site in the peptidase domain of METAP1 in a process requiring GTP hydrolysis. GTP/GDP exchange is required for release of active METAP1. The polypeptide is Zinc-regulated GTPase metalloprotein activator 1A (Homo sapiens (Human)).